Here is a 140-residue protein sequence, read N- to C-terminus: Putative pre-16S rRNA nuclease (140 aa).

Belongs to the YqgF nuclease family.

The protein localises to the cytoplasm. Its function is as follows. Could be a nuclease involved in processing of the 5'-end of pre-16S rRNA. The protein is Putative pre-16S rRNA nuclease of Vibrio cholerae serotype O1 (strain ATCC 39541 / Classical Ogawa 395 / O395).